The sequence spans 390 residues: NADH-quinone oxidoreductase subunit D (390 aa).

Belongs to the complex I 49 kDa subunit family. In terms of assembly, NDH-1 is composed of 14 different subunits. Subunits NuoB, C, D, E, F, and G constitute the peripheral sector of the complex.

It localises to the cell inner membrane. It catalyses the reaction a quinone + NADH + 5 H(+)(in) = a quinol + NAD(+) + 4 H(+)(out). In terms of biological role, NDH-1 shuttles electrons from NADH, via FMN and iron-sulfur (Fe-S) centers, to quinones in the respiratory chain. The immediate electron acceptor for the enzyme in this species is believed to be ubiquinone. Couples the redox reaction to proton translocation (for every two electrons transferred, four hydrogen ions are translocated across the cytoplasmic membrane), and thus conserves the redox energy in a proton gradient. The polypeptide is NADH-quinone oxidoreductase subunit D (Trichlorobacter lovleyi (strain ATCC BAA-1151 / DSM 17278 / SZ) (Geobacter lovleyi)).